Consider the following 229-residue polypeptide: uncharacterized protein (229 aa).

A signal peptide spans 1–26 (MSRNDARYLRCTAALGAAFFACGAAA).

Belongs to the OmpW/AlkL family.

It is found in the cell outer membrane. This is an uncharacterized protein from Sinorhizobium fredii (strain NBRC 101917 / NGR234).